A 251-amino-acid chain; its full sequence is uncharacterized protein (251 aa).

Residues His-6, His-8, Glu-90, His-130, His-154, and Asp-202 each contribute to the a divalent metal cation site.

The protein belongs to the metallo-dependent hydrolases superfamily. TatD-type hydrolase family. It depends on a divalent metal cation as a cofactor.

This is an uncharacterized protein from Haemophilus influenzae (strain ATCC 51907 / DSM 11121 / KW20 / Rd).